The chain runs to 417 residues: Glucose-1-phosphate adenylyltransferase (417 aa).

Alpha-D-glucose 1-phosphate-binding positions include Y105, G170, 185 to 186 (EK), and S203.

It belongs to the bacterial/plant glucose-1-phosphate adenylyltransferase family. In terms of assembly, homotetramer.

It catalyses the reaction alpha-D-glucose 1-phosphate + ATP + H(+) = ADP-alpha-D-glucose + diphosphate. Its pathway is glycan biosynthesis; glycogen biosynthesis. Functionally, involved in the biosynthesis of ADP-glucose, a building block required for the elongation reactions to produce glycogen. Catalyzes the reaction between ATP and alpha-D-glucose 1-phosphate (G1P) to produce pyrophosphate and ADP-Glc. The sequence is that of Glucose-1-phosphate adenylyltransferase from Granulibacter bethesdensis (strain ATCC BAA-1260 / CGDNIH1).